The sequence spans 383 residues: Protein salvador homolog 1 (383 aa).

Phosphoserine occurs at positions 94 and 136. WW domains lie at Leu199 to Glu232 and Glu234 to Ala267. Position 210 is a phosphothreonine (Thr210). The region spanning Ile321 to Arg368 is the SARAH domain. A coiled-coil region spans residues Met344–Gln373.

In terms of assembly, homodimer. Stabilized through interaction with STK3/MST2 or STK4/MST1. Interacts (via SARAH domain) with isoform 1 of NEK2. Interacts with ESR1 only in the presence of STK3/MST2. Interacts with WTIP and AJUBA. In terms of processing, phosphorylated by STK3/MST2 and STK4/MST1. Phosphorylation is not required for SAV1 stability and may increase the number of protein binding sites on the scaffold molecule. In terms of tissue distribution, ubiquitously expressed in adult tissues with highest expression in the pancreas, aorta and interventricular septum and lowest expression in skeletal muscle. Expression was higher in fetal than in the adult heart. Expressed in various cell lines.

The protein localises to the nucleus. The protein resides in the cytoplasm. Functionally, regulator of STK3/MST2 and STK4/MST1 in the Hippo signaling pathway which plays a pivotal role in organ size control and tumor suppression by restricting proliferation and promoting apoptosis. The core of this pathway is composed of a kinase cascade wherein STK3/MST2 and STK4/MST1, in complex with its regulatory protein SAV1, phosphorylates and activates LATS1/2 in complex with its regulatory protein MOB1, which in turn phosphorylates and inactivates YAP1 oncoprotein and WWTR1/TAZ. Phosphorylation of YAP1 by LATS1/2 inhibits its translocation into the nucleus to regulate cellular genes important for cell proliferation, cell death, and cell migration. SAV1 is required for STK3/MST2 and STK4/MST1 activation and promotes cell-cycle exit and terminal differentiation in developing epithelial tissues. Plays a role in centrosome disjunction by regulating the localization of NEK2 to centrosomes, and its ability to phosphorylate CROCC and CEP250. In conjunction with STK3/MST2, activates the transcriptional activity of ESR1 through the modulation of its phosphorylation. This Homo sapiens (Human) protein is Protein salvador homolog 1.